The primary structure comprises 501 residues: Glycosyltransferase family 92 protein F13G3.3 (501 aa).

Residues 10-30 traverse the membrane as a helical segment; sequence LSVVLLFSFLFFVTAVLLQFI. The 289-residue stretch at 151-439 folds into the GT92 domain; it reads KPVVMCISPL…ISDCYKQSYY (289 aa).

Belongs to the glycosyltransferase 92 family.

The protein resides in the membrane. This Caenorhabditis elegans protein is Glycosyltransferase family 92 protein F13G3.3.